The sequence spans 327 residues: Sugar transporter ERD6-like 9 (327 aa).

8 helical membrane passes run 26 to 46 (FLVF…VALG), 68 to 88 (VFGS…ATIA), 102 to 122 (VFCI…WLDL), 125 to 145 (FFVG…IAEI), 152 to 172 (GTFT…AYYL), 180 to 200 (IIAL…FFVP), 260 to 280 (LTIG…GLGY), and 295 to 315 (IGMT…LILV).

The protein belongs to the major facilitator superfamily. Sugar transporter (TC 2.A.1.1) family.

It localises to the membrane. In terms of biological role, sugar transporter. This Arabidopsis thaliana (Mouse-ear cress) protein is Sugar transporter ERD6-like 9.